We begin with the raw amino-acid sequence, 279 residues long: 3-methyl-2-oxobutanoate hydroxymethyltransferase (279 aa).

Positions 44 and 83 each coordinate Mg(2+). Residues 44 to 45 (DS), Asp83, and Lys112 contribute to the 3-methyl-2-oxobutanoate site. Position 114 (Glu114) interacts with Mg(2+). Catalysis depends on Glu181, which acts as the Proton acceptor.

Belongs to the PanB family. In terms of assembly, homodecamer; pentamer of dimers. Mg(2+) serves as cofactor.

Its subcellular location is the cytoplasm. It catalyses the reaction 3-methyl-2-oxobutanoate + (6R)-5,10-methylene-5,6,7,8-tetrahydrofolate + H2O = 2-dehydropantoate + (6S)-5,6,7,8-tetrahydrofolate. Its pathway is cofactor biosynthesis; coenzyme A biosynthesis. In terms of biological role, catalyzes the reversible reaction in which hydroxymethyl group from 5,10-methylenetetrahydrofolate is transferred onto alpha-ketoisovalerate to form ketopantoate. The sequence is that of 3-methyl-2-oxobutanoate hydroxymethyltransferase from Nitrosopumilus maritimus (strain SCM1).